Consider the following 376-residue polypeptide: Chaperone protein DnaJ (376 aa).

The J domain occupies 5–70 (DYYEILGVSK…QKRAAYDQYG (66 aa)). The CR-type zinc finger occupies 131 to 209 (GVTKEIRIPT…CHGHGRVERS (79 aa)). Residues Cys144, Cys147, Cys161, Cys164, Cys183, Cys186, Cys197, and Cys200 each contribute to the Zn(2+) site. CXXCXGXG motif repeat units lie at residues 144-151 (CDVCHGSG), 161-168 (CPTCHGSG), 183-190 (CPHCQGRG), and 197-204 (CNKCHGHG).

It belongs to the DnaJ family. In terms of assembly, homodimer. Zn(2+) is required as a cofactor.

It localises to the cytoplasm. Functionally, participates actively in the response to hyperosmotic and heat shock by preventing the aggregation of stress-denatured proteins and by disaggregating proteins, also in an autonomous, DnaK-independent fashion. Unfolded proteins bind initially to DnaJ; upon interaction with the DnaJ-bound protein, DnaK hydrolyzes its bound ATP, resulting in the formation of a stable complex. GrpE releases ADP from DnaK; ATP binding to DnaK triggers the release of the substrate protein, thus completing the reaction cycle. Several rounds of ATP-dependent interactions between DnaJ, DnaK and GrpE are required for fully efficient folding. Also involved, together with DnaK and GrpE, in the DNA replication of plasmids through activation of initiation proteins. The chain is Chaperone protein DnaJ from Shigella dysenteriae serotype 1 (strain Sd197).